Reading from the N-terminus, the 152-residue chain is Ubiquitin-activating enzyme E1 Y (152 aa).

C51 (glycyl thioester intermediate) is an active-site residue.

It belongs to the ubiquitin-activating E1 family. As to quaternary structure, monomer.

The enzyme catalyses ATP + ubiquitin + [E1 ubiquitin-activating enzyme]-L-cysteine = AMP + diphosphate + S-ubiquitinyl-[E1 ubiquitin-activating enzyme]-L-cysteine.. It functions in the pathway protein modification; protein ubiquitination. In terms of biological role, activates ubiquitin by first adenylating its C-terminal glycine residue with ATP, and thereafter linking this residue to the side chain of a cysteine residue in E1, yielding a ubiquitin-E1 thioester and free AMP. The Y chromosome form could be involved in the survival and proliferation of differentiating spermatogonia. The sequence is that of Ubiquitin-activating enzyme E1 Y (UBE1Y) from Osphranter rufus (Red kangaroo).